Consider the following 250-residue polypeptide: Probable transcriptional regulatory protein Rxyl_1318 (250 aa).

It belongs to the TACO1 family.

Its subcellular location is the cytoplasm. The polypeptide is Probable transcriptional regulatory protein Rxyl_1318 (Rubrobacter xylanophilus (strain DSM 9941 / JCM 11954 / NBRC 16129 / PRD-1)).